The following is a 149-amino-acid chain: Sperm surface protein Sp17 (149 aa).

Over residues 83-96 (CEQELAKSSGREET) the composition is skewed to basic and acidic residues. The interval 83 to 114 (CEQELAKSSGREETPVTPFEESTEEEREQEEA) is disordered. The segment covering 103-113 (ESTEEEREQEE) has biased composition (acidic residues). Residues 112–141 (EEAAALKIQSLFRGHVAREEVKKMKSDKNE) enclose the IQ domain.

Homodimer. May interact with ROPN1. Testis- and sperm-specific.

Its subcellular location is the membrane. In terms of biological role, sperm surface zona pellucida binding protein. Helps to bind spermatozoa to the zona pellucida with high affinity. Might function in binding zona pellucida and carbohydrates. In Mus musculus (Mouse), this protein is Sperm surface protein Sp17 (Spa17).